The sequence spans 163 residues: uncharacterized protein (163 aa).

This is an uncharacterized protein from Caenorhabditis elegans.